The primary structure comprises 2544 residues: Highly reducing polyketide synthase pkhB (2544 aa).

Positions Ser9–Ser438 constitute a Ketosynthase family 3 (KS3) domain. Catalysis depends on for beta-ketoacyl synthase activity residues Cys182, His317, and His358. The segment at Val566–Glu876 is malonyl-CoA:ACP transacylase (MAT) domain. The N-terminal hotdog fold stretch occupies residues His948 to Val1082. A dehydratase (DH) domain region spans residues His948–Ser1252. The PKS/mFAS DH domain occupies His948–Ala1254. His980 acts as the Proton acceptor; for dehydratase activity in catalysis. Residues Tyr1095 to Ala1254 are C-terminal hotdog fold. Asp1165 acts as the Proton donor; for dehydratase activity in catalysis. The segment at Ser1398–Asp1573 is methyltransferase (CMet) domain. The enoyl reductase (ER) domain stretch occupies residues Gly1826 to Leu2142. The tract at residues Ala2169–Ser2356 is ketoreductase (KR) domain. The Carrier domain occupies Glu2462–Ser2539. Ser2499 bears the O-(pantetheine 4'-phosphoryl)serine mark.

Pantetheine 4'-phosphate serves as cofactor.

It participates in secondary metabolite biosynthesis. Highly reducing polyketide synthase; part of the pkh gene cluster that mediates the biosynthesis of 2,4-dihydroxy-6-[(3E,5E,7E)-2-oxonona-3,5,7-trienyl]benzaldehyde. The highly reducing polyketide synthase pkhB first produces the (2E,4E,6E)-octa-2,4,6-trienyl strater unit for the non-reducing polyketide synthase pkhA. This octatrienoyl starter is then loaded onto the SAT domain of the NR-PKS pkhA to be condensed with 4 malonyl-CoA units to yield 2,4-dihydroxy-6-[(3E,5E,7E)-2-oxonona-3,5,7-trienyl]benzaldehyde. The chain is Highly reducing polyketide synthase pkhB from Emericella nidulans (strain FGSC A4 / ATCC 38163 / CBS 112.46 / NRRL 194 / M139) (Aspergillus nidulans).